The chain runs to 380 residues: Cytochrome b (380 aa).

4 helical membrane-spanning segments follow: residues 33–53 (FGSLLGLCLATQILTGLFLAM), 77–98 (WLIRNIHANGASFFFICIYMHI), 113–133 (WNIGVVLLLLTMMTAFVGYVL), and 178–198 (FFAFHFLFPFVIAAATVLHLL). Residues His-83 and His-97 each contribute to the heme b site. Heme b contacts are provided by His-182 and His-196. His-201 contacts a ubiquinone. Helical transmembrane passes span 226–246 (YKDLLGFVAMLLGLTSLALFA), 288–308 (LGGVLALLFSILVLMVVPILH), 320–340 (LTQFLFWALVADMLILTWIGG), and 347–367 (FIIIGQVASVIYFTIFLVLSP).

This sequence belongs to the cytochrome b family. In terms of assembly, the cytochrome bc1 complex contains 3 respiratory subunits (MT-CYB, CYC1 and UQCRFS1), 2 core proteins (UQCRC1 and UQCRC2) and probably 6 low-molecular weight proteins. The cofactor is heme b.

Its subcellular location is the mitochondrion inner membrane. Functionally, component of the ubiquinol-cytochrome c reductase complex (complex III or cytochrome b-c1 complex) that is part of the mitochondrial respiratory chain. The b-c1 complex mediates electron transfer from ubiquinol to cytochrome c. Contributes to the generation of a proton gradient across the mitochondrial membrane that is then used for ATP synthesis. The protein is Cytochrome b (mt-cyb) of Oncorhynchus mykiss (Rainbow trout).